A 206-amino-acid chain; its full sequence is Outer-membrane lipoprotein carrier protein (206 aa).

The N-terminal stretch at methionine 1 to alanine 21 is a signal peptide.

This sequence belongs to the LolA family. Monomer.

The protein resides in the periplasm. In terms of biological role, participates in the translocation of lipoproteins from the inner membrane to the outer membrane. Only forms a complex with a lipoprotein if the residue after the N-terminal Cys is not an aspartate (The Asp acts as a targeting signal to indicate that the lipoprotein should stay in the inner membrane). The polypeptide is Outer-membrane lipoprotein carrier protein (Shewanella oneidensis (strain ATCC 700550 / JCM 31522 / CIP 106686 / LMG 19005 / NCIMB 14063 / MR-1)).